The sequence spans 148 residues: Ubiquitin-conjugating enzyme E2-17 kDa (148 aa).

The region spanning 1 to 147 (MASKRILKEL…ARSWTQKYAM (147 aa)) is the UBC core domain. Cys85 (glycyl thioester intermediate) is an active-site residue.

This sequence belongs to the ubiquitin-conjugating enzyme family.

The enzyme catalyses S-ubiquitinyl-[E1 ubiquitin-activating enzyme]-L-cysteine + [E2 ubiquitin-conjugating enzyme]-L-cysteine = [E1 ubiquitin-activating enzyme]-L-cysteine + S-ubiquitinyl-[E2 ubiquitin-conjugating enzyme]-L-cysteine.. Its pathway is protein modification; protein ubiquitination. In terms of biological role, catalyzes the covalent attachment of ubiquitin to other proteins. Mediates the selective degradation of short-lived and abnormal proteins. The protein is Ubiquitin-conjugating enzyme E2-17 kDa of Solanum lycopersicum (Tomato).